A 480-amino-acid chain; its full sequence is UDP-N-acetylmuramate--L-alanine ligase (480 aa).

An ATP-binding site is contributed by 125–131; the sequence is GTHGKTT.

Belongs to the MurCDEF family.

Its subcellular location is the cytoplasm. The enzyme catalyses UDP-N-acetyl-alpha-D-muramate + L-alanine + ATP = UDP-N-acetyl-alpha-D-muramoyl-L-alanine + ADP + phosphate + H(+). The protein operates within cell wall biogenesis; peptidoglycan biosynthesis. Its function is as follows. Cell wall formation. This is UDP-N-acetylmuramate--L-alanine ligase from Ectopseudomonas mendocina (strain ymp) (Pseudomonas mendocina).